Consider the following 149-residue polypeptide: MGDNYWIDPVNLSPQELVETLQRIDQEGYEVIVVTEGGFPMGPFRMAFRIDEEPNMYYISQKDLALEYDPLQFLHWVRQYSGEIINWTHHGRVPWWKIFQMLEAKLEDSYYYETTMFYIPSSISHDCWSLFLQFWREGFGSPPLDVAWS.

In Snake adenovirus serotype 1 (SnAdV-1), this protein is Protein E4.1.